We begin with the raw amino-acid sequence, 761 residues long: Phosphoribosylformylglycinamidine synthase subunit PurL (761 aa).

Over residues 1–13 the composition is skewed to polar residues; the sequence is MTSRVDTVDNAAS. Positions 1-23 are disordered; that stretch reads MTSRVDTVDNAASTPDHPQPFAE. H57 is an active-site residue. Residues Y60 and K104 each coordinate ATP. Residue E106 coordinates Mg(2+). Residues 107-110 and R129 contribute to the substrate site; that span reads SHNH. H108 functions as the Proton acceptor in the catalytic mechanism. D130 is a Mg(2+) binding site. Q259 is a binding site for substrate. D287 serves as a coordination point for Mg(2+). 331 to 333 lines the substrate pocket; sequence ESQ. ATP contacts are provided by N519 and G556. N557 contacts Mg(2+). S559 contacts substrate.

This sequence belongs to the FGAMS family. Monomer. Part of the FGAM synthase complex composed of 1 PurL, 1 PurQ and 2 PurS subunits.

Its subcellular location is the cytoplasm. The catalysed reaction is N(2)-formyl-N(1)-(5-phospho-beta-D-ribosyl)glycinamide + L-glutamine + ATP + H2O = 2-formamido-N(1)-(5-O-phospho-beta-D-ribosyl)acetamidine + L-glutamate + ADP + phosphate + H(+). Its pathway is purine metabolism; IMP biosynthesis via de novo pathway; 5-amino-1-(5-phospho-D-ribosyl)imidazole from N(2)-formyl-N(1)-(5-phospho-D-ribosyl)glycinamide: step 1/2. Its function is as follows. Part of the phosphoribosylformylglycinamidine synthase complex involved in the purines biosynthetic pathway. Catalyzes the ATP-dependent conversion of formylglycinamide ribonucleotide (FGAR) and glutamine to yield formylglycinamidine ribonucleotide (FGAM) and glutamate. The FGAM synthase complex is composed of three subunits. PurQ produces an ammonia molecule by converting glutamine to glutamate. PurL transfers the ammonia molecule to FGAR to form FGAM in an ATP-dependent manner. PurS interacts with PurQ and PurL and is thought to assist in the transfer of the ammonia molecule from PurQ to PurL. This is Phosphoribosylformylglycinamidine synthase subunit PurL from Mycobacteroides abscessus (strain ATCC 19977 / DSM 44196 / CCUG 20993 / CIP 104536 / JCM 13569 / NCTC 13031 / TMC 1543 / L948) (Mycobacterium abscessus).